A 223-amino-acid polypeptide reads, in one-letter code: Endonuclease V (223 aa).

Residues D35 and D103 each contribute to the Mg(2+) site.

This sequence belongs to the endonuclease V family. Mg(2+) serves as cofactor.

The protein localises to the cytoplasm. It carries out the reaction Endonucleolytic cleavage at apurinic or apyrimidinic sites to products with a 5'-phosphate.. In terms of biological role, DNA repair enzyme involved in the repair of deaminated bases. Selectively cleaves double-stranded DNA at the second phosphodiester bond 3' to a deoxyinosine leaving behind the intact lesion on the nicked DNA. This chain is Endonuclease V, found in Escherichia coli O45:K1 (strain S88 / ExPEC).